The primary structure comprises 126 residues: Aspartate 1-decarboxylase 1 (126 aa).

Serine 25 (schiff-base intermediate with substrate; via pyruvic acid) is an active-site residue. At serine 25 the chain carries Pyruvic acid (Ser). Threonine 57 is a substrate binding site. Residue tyrosine 58 is the Proton donor of the active site. Residue glycine 73 to alanine 75 coordinates substrate.

Belongs to the PanD family. In terms of assembly, heterooctamer of four alpha and four beta subunits. Pyruvate is required as a cofactor. In terms of processing, is synthesized initially as an inactive proenzyme, which is activated by self-cleavage at a specific serine bond to produce a beta-subunit with a hydroxyl group at its C-terminus and an alpha-subunit with a pyruvoyl group at its N-terminus.

The protein localises to the cytoplasm. It catalyses the reaction L-aspartate + H(+) = beta-alanine + CO2. Its pathway is cofactor biosynthesis; (R)-pantothenate biosynthesis; beta-alanine from L-aspartate: step 1/1. Catalyzes the pyruvoyl-dependent decarboxylation of aspartate to produce beta-alanine. This chain is Aspartate 1-decarboxylase 1, found in Polaromonas sp. (strain JS666 / ATCC BAA-500).